Consider the following 236-residue polypeptide: Lipoprotein signal peptidase (236 aa).

Transmembrane regions (helical) follow at residues 8-28 (FYGIALLAVVIDQVLKLWVYF), 44-64 (WFKLFYTLNPGMAFGIQFGFT), 68-88 (VLLTIIRIIATSMIIKYIWNL), and 98-118 (LLWGWSLILGGAAGNGIDSIF). Catalysis depends on residues aspartate 141 and aspartate 174. Residues 166–186 (CLPVFNLADVAILAGVALIVL) traverse the membrane as a helical segment.

Belongs to the peptidase A8 family.

The protein resides in the cell inner membrane. The enzyme catalyses Release of signal peptides from bacterial membrane prolipoproteins. Hydrolyzes -Xaa-Yaa-Zaa-|-(S,diacylglyceryl)Cys-, in which Xaa is hydrophobic (preferably Leu), and Yaa (Ala or Ser) and Zaa (Gly or Ala) have small, neutral side chains.. Its pathway is protein modification; lipoprotein biosynthesis (signal peptide cleavage). Its function is as follows. This protein specifically catalyzes the removal of signal peptides from prolipoproteins. This Amoebophilus asiaticus (strain 5a2) protein is Lipoprotein signal peptidase.